Here is an 83-residue protein sequence, read N- to C-terminus: Turripeptide Lol11.1 (83 aa).

The N-terminal stretch at 1 to 27 is a signal peptide; the sequence is MARQMMTVGCLILIVVLLDMMVPVFNT.

Belongs to the conopeptide I2-like superfamily. Post-translationally, contains 4 disulfide bonds. As to expression, expressed by the venom duct.

The protein localises to the secreted. Its function is as follows. Acts as a neurotoxin by inhibiting voltage-gated potassium channels (Kv). This is Turripeptide Lol11.1 from Iotyrris olangoensis (Sea snail).